We begin with the raw amino-acid sequence, 345 residues long: tRNA N6-adenosine threonylcarbamoyltransferase (345 aa).

2 residues coordinate Fe cation: histidine 111 and histidine 115. Substrate is bound by residues 134–138 (LVSGG), aspartate 167, glycine 180, aspartate 184, and asparagine 278. Aspartate 306 provides a ligand contact to Fe cation.

Belongs to the KAE1 / TsaD family. It depends on Fe(2+) as a cofactor.

The protein localises to the cytoplasm. It catalyses the reaction L-threonylcarbamoyladenylate + adenosine(37) in tRNA = N(6)-L-threonylcarbamoyladenosine(37) in tRNA + AMP + H(+). Functionally, required for the formation of a threonylcarbamoyl group on adenosine at position 37 (t(6)A37) in tRNAs that read codons beginning with adenine. Is involved in the transfer of the threonylcarbamoyl moiety of threonylcarbamoyl-AMP (TC-AMP) to the N6 group of A37, together with TsaE and TsaB. TsaD likely plays a direct catalytic role in this reaction. The protein is tRNA N6-adenosine threonylcarbamoyltransferase of Cyanothece sp. (strain PCC 7425 / ATCC 29141).